Consider the following 362-residue polypeptide: Cobalt-precorrin-5B C(1)-methyltransferase (362 aa).

The protein belongs to the CbiD family.

The catalysed reaction is Co-precorrin-5B + S-adenosyl-L-methionine = Co-precorrin-6A + S-adenosyl-L-homocysteine. It participates in cofactor biosynthesis; adenosylcobalamin biosynthesis; cob(II)yrinate a,c-diamide from sirohydrochlorin (anaerobic route): step 6/10. Catalyzes the methylation of C-1 in cobalt-precorrin-5B to form cobalt-precorrin-6A. The polypeptide is Cobalt-precorrin-5B C(1)-methyltransferase (Burkholderia ambifaria (strain MC40-6)).